A 282-amino-acid chain; its full sequence is 4-hydroxybenzoate octaprenyltransferase (282 aa).

9 helical membrane passes run 17 to 37 (IGIL…NQGF), 40 to 60 (IDLL…GCVI), 90 to 110 (AFIL…KLPI), 113 to 133 (FYFA…KRFL), 135 to 155 (APQL…FIAS), 163 to 183 (FIVL…MYAM), 207 to 227 (LIIA…AINK), 231 to 251 (WFFY…LKLI), and 262 to 282 (AFLV…LALI).

The protein belongs to the UbiA prenyltransferase family. Mg(2+) is required as a cofactor.

The protein resides in the cell inner membrane. It carries out the reaction all-trans-octaprenyl diphosphate + 4-hydroxybenzoate = 4-hydroxy-3-(all-trans-octaprenyl)benzoate + diphosphate. Its pathway is cofactor biosynthesis; ubiquinone biosynthesis. In terms of biological role, catalyzes the prenylation of para-hydroxybenzoate (PHB) with an all-trans polyprenyl group. Mediates the second step in the final reaction sequence of ubiquinone-8 (UQ-8) biosynthesis, which is the condensation of the polyisoprenoid side chain with PHB, generating the first membrane-bound Q intermediate 3-octaprenyl-4-hydroxybenzoate. This chain is 4-hydroxybenzoate octaprenyltransferase, found in Legionella pneumophila subsp. pneumophila (strain Philadelphia 1 / ATCC 33152 / DSM 7513).